The primary structure comprises 328 residues: B3 domain-containing protein At5g60140 (328 aa).

The TF-B3 DNA-binding region spans 13–109 (SKFFKPYLPS…FFNFSIFDHE (97 aa)). The segment at 145 to 221 (LNSDDSDDSD…EDEDDLEDED (77 aa)) is disordered. Composition is skewed to acidic residues over residues 148–182 (DDSD…AEDG) and 190–221 (GLED…EDED).

The protein resides in the nucleus. This chain is B3 domain-containing protein At5g60140, found in Arabidopsis thaliana (Mouse-ear cress).